Reading from the N-terminus, the 313-residue chain is Homoserine O-succinyltransferase (313 aa).

The active-site Acyl-thioester intermediate is Cys142. 2 residues coordinate substrate: Lys163 and Ser192. His235 acts as the Proton acceptor in catalysis. Residue Glu237 is part of the active site. Arg249 serves as a coordination point for substrate.

This sequence belongs to the MetA family.

Its subcellular location is the cytoplasm. It carries out the reaction L-homoserine + succinyl-CoA = O-succinyl-L-homoserine + CoA. It functions in the pathway amino-acid biosynthesis; L-methionine biosynthesis via de novo pathway; O-succinyl-L-homoserine from L-homoserine: step 1/1. Its function is as follows. Transfers a succinyl group from succinyl-CoA to L-homoserine, forming succinyl-L-homoserine. The protein is Homoserine O-succinyltransferase of Vibrio campbellii (strain ATCC BAA-1116).